Here is a 156-residue protein sequence, read N- to C-terminus: Peroxisome assembly protein 22 (156 aa).

Residues 24-46 form a helical membrane-spanning segment; the sequence is LSIIAVGVLSTVAVTVGYLLYLY.

It belongs to the peroxin-22 family.

The protein resides in the peroxisome membrane. Its function is as follows. Involved in peroxisome biogenesis. This is Peroxisome assembly protein 22 (PEX22) from Kluyveromyces lactis (strain ATCC 8585 / CBS 2359 / DSM 70799 / NBRC 1267 / NRRL Y-1140 / WM37) (Yeast).